Here is a 439-residue protein sequence, read N- to C-terminus: Acyl-coenzyme A thioesterase 9, mitochondrial (439 aa).

The N-terminal 21 residues, 1-21, are a transit peptide targeting the mitochondrion; it reads MKRAAIRLWTLNKGLLTHGRG. HotDog ACOT-type domains follow at residues 85–209 and 289–401; these read SYIE…RDSE and EDTK…EKEV. At Lys102 the chain carries N6-acetyllysine.

Belongs to the acyl coenzyme A hydrolase family. In terms of assembly, interacts with NYAP1, NYAP2 and MYO16. As to expression, widely expressed.

It is found in the mitochondrion. It localises to the mitochondrion matrix. Its subcellular location is the mitochondrion inner membrane. The enzyme catalyses butanoyl-CoA + H2O = butanoate + CoA + H(+). It carries out the reaction propanoyl-CoA + H2O = propanoate + CoA + H(+). The catalysed reaction is hexadecanoyl-CoA + H2O = hexadecanoate + CoA + H(+). It catalyses the reaction octanoyl-CoA + H2O = octanoate + CoA + H(+). The enzyme catalyses decanoyl-CoA + H2O = decanoate + CoA + H(+). It carries out the reaction tetradecanoyl-CoA + H2O = tetradecanoate + CoA + H(+). The catalysed reaction is 4,8-dimethylnonanoyl-CoA + H2O = 4,8-dimethylnonanoate + CoA + H(+). It catalyses the reaction 3-methylbutanoyl-CoA + H2O = 3-methylbutanoate + CoA + H(+). The enzyme catalyses 2-methylpropanoyl-CoA + H2O = 2-methylpropanoate + CoA + H(+). The protein operates within lipid metabolism; fatty acid metabolism. With respect to regulation, strongly inhibited by NADH and CoA. Its function is as follows. Mitochondrial acyl-CoA thioesterase. Catalyzes the hydrolysis of acyl-CoAs into free fatty acids and coenzyme A (CoA), regulating their respective intracellular levels. Shows a clear preference for hydrophobic short-, medium-, and long-chain saturated acyl-CoAs with some activity also with short-chain dicarboxylic CoA esters. Regulates both mitochondrial lipid and amino acid metabolism. In Mus musculus (Mouse), this protein is Acyl-coenzyme A thioesterase 9, mitochondrial (Acot9).